The primary structure comprises 250 residues: DNA repair protein RecO (250 aa).

It belongs to the RecO family.

Its function is as follows. Involved in DNA repair and RecF pathway recombination. The polypeptide is DNA repair protein RecO (Staphylococcus aureus (strain Mu3 / ATCC 700698)).